We begin with the raw amino-acid sequence, 141 residues long: Protein KRTCAP2 homolog (141 aa).

The next 4 membrane-spanning stretches (helical) occupy residues 11 to 31 (VVSS…LRFC), 42 to 62 (VLLG…CVSN), 74 to 94 (AKLL…AGLV), and 97 to 117 (VCAT…NRIS).

Belongs to the KRTCAP2 family. In terms of assembly, component of the oligosaccharyltransferase (OST) complex.

The protein resides in the membrane. Functionally, subunit of the oligosaccharyl transferase (OST) complex that catalyzes the initial transfer of a defined glycan (Glc(3)Man(9)GlcNAc(2) in eukaryotes) from the lipid carrier dolichol-pyrophosphate to an asparagine residue within an Asn-X-Ser/Thr consensus motif in nascent polypeptide chains, the first step in protein N-glycosylation. N-glycosylation occurs cotranslationally and the complex associates with the Sec61 complex at the channel-forming translocon complex that mediates protein translocation across the endoplasmic reticulum (ER). All subunits are required for a maximal enzyme activity. The chain is Protein KRTCAP2 homolog from Drosophila melanogaster (Fruit fly).